A 490-amino-acid chain; its full sequence is Bifunctional protein HldE (490 aa).

A ribokinase region spans residues 1–330 (MERKNVESLF…GSLGFQHGEG (330 aa)). An ATP-binding site is contributed by 205-208 (NRKE). Asp-275 is a catalytic residue. The segment at 356–490 (FTNGCFDLLH…EKILKAYGEE (135 aa)) is cytidylyltransferase.

This sequence in the N-terminal section; belongs to the carbohydrate kinase PfkB family. The protein in the C-terminal section; belongs to the cytidylyltransferase family. In terms of assembly, homodimer.

The enzyme catalyses D-glycero-beta-D-manno-heptose 7-phosphate + ATP = D-glycero-beta-D-manno-heptose 1,7-bisphosphate + ADP + H(+). The catalysed reaction is D-glycero-beta-D-manno-heptose 1-phosphate + ATP + H(+) = ADP-D-glycero-beta-D-manno-heptose + diphosphate. Its pathway is nucleotide-sugar biosynthesis; ADP-L-glycero-beta-D-manno-heptose biosynthesis; ADP-L-glycero-beta-D-manno-heptose from D-glycero-beta-D-manno-heptose 7-phosphate: step 1/4. The protein operates within nucleotide-sugar biosynthesis; ADP-L-glycero-beta-D-manno-heptose biosynthesis; ADP-L-glycero-beta-D-manno-heptose from D-glycero-beta-D-manno-heptose 7-phosphate: step 3/4. Catalyzes the phosphorylation of D-glycero-D-manno-heptose 7-phosphate at the C-1 position to selectively form D-glycero-beta-D-manno-heptose-1,7-bisphosphate. In terms of biological role, catalyzes the ADP transfer from ATP to D-glycero-beta-D-manno-heptose 1-phosphate, yielding ADP-D-glycero-beta-D-manno-heptose. The chain is Bifunctional protein HldE from Geobacter sulfurreducens (strain ATCC 51573 / DSM 12127 / PCA).